The sequence spans 272 residues: Shikimate dehydrogenase (NADP(+)) (272 aa).

Residues 14–16 (SKS) and T61 contribute to the shikimate site. The active-site Proton acceptor is the K65. E77 contacts NADP(+). Shikimate is bound by residues N86 and D102. NADP(+) is bound by residues 126–130 (GAGGA), 149–154 (NRTVSR), and M213. Residue Y215 participates in shikimate binding. G237 contacts NADP(+).

The protein belongs to the shikimate dehydrogenase family. In terms of assembly, homodimer.

It catalyses the reaction shikimate + NADP(+) = 3-dehydroshikimate + NADPH + H(+). It participates in metabolic intermediate biosynthesis; chorismate biosynthesis; chorismate from D-erythrose 4-phosphate and phosphoenolpyruvate: step 4/7. Its function is as follows. Involved in the biosynthesis of the chorismate, which leads to the biosynthesis of aromatic amino acids. Catalyzes the reversible NADPH linked reduction of 3-dehydroshikimate (DHSA) to yield shikimate (SA). This Escherichia coli O6:K15:H31 (strain 536 / UPEC) protein is Shikimate dehydrogenase (NADP(+)).